The chain runs to 345 residues: S-adenosylmethionine:tRNA ribosyltransferase-isomerase (345 aa).

Belongs to the QueA family. In terms of assembly, monomer.

It localises to the cytoplasm. It catalyses the reaction 7-aminomethyl-7-carbaguanosine(34) in tRNA + S-adenosyl-L-methionine = epoxyqueuosine(34) in tRNA + adenine + L-methionine + 2 H(+). The protein operates within tRNA modification; tRNA-queuosine biosynthesis. Transfers and isomerizes the ribose moiety from AdoMet to the 7-aminomethyl group of 7-deazaguanine (preQ1-tRNA) to give epoxyqueuosine (oQ-tRNA). In Shewanella sp. (strain ANA-3), this protein is S-adenosylmethionine:tRNA ribosyltransferase-isomerase.